Consider the following 463-residue polypeptide: MAASMFYGRLVAVATLRNHRPRTAQRAAAQVLGSSGLFNNHGLQVQQQQQRNLSLHEYMSMELLQEAGVSVPKGYVAKSPDEAYAIAKKLGSKDVVIKAQVLAGGRGKGTFESGLKGGVKIVFSPEEAKAVSSQMIGKKLFTKQTGEKGRICNQVLVCERKYPRREYYFAITMERSFQGPVLIGSSHGGVNIEDVAAESPEAIIKEPIDIEEGIKKEQALQLAQKMGFPPNIVESAAENMVKLYSLFLKYDATMIEINPMVEDSDGAVLCMDAKINFDSNSAYRQKKIFDLQDWTQEDERDKDAAKANLNYIGLDGNIGCLVNGAGLAMATMDIIKLHGGTPANFLDVGGGATVHQVTEAFKLITSDKKVLAILVNIFGGIMRCDVIAQGIVMAVKDLEIKIPVVVRLQGTRVDDAKALIADSGLKILACDDLDEAARMVVKLSEIVTLAKQAHVDVKFQLPI.

The transit peptide at 1–52 (MAASMFYGRLVAVATLRNHRPRTAQRAAAQVLGSSGLFNNHGLQVQQQQQRN) directs the protein to the mitochondrion. The region spanning 61–288 (MELLQEAGVS…SNSAYRQKKI (228 aa)) is the ATP-grasp domain. K78 is subject to N6-acetyllysine. Y84 carries the phosphotyrosine modification. N6-acetyllysine; alternate is present on K88. K88 is modified (N6-succinyllysine; alternate). ATP is bound by residues K98 and 105-107 (GRG). Residues K129, K139, K143, and K216 each carry the N6-acetyllysine modification. Mg(2+) contacts are provided by N258 and D272. S279 is modified (phosphoserine). N323 provides a ligand contact to substrate. T341 is modified (phosphothreonine). K368 is subject to N6-acetyllysine. Position 380 to 382 (380 to 382 (GIM)) interacts with substrate.

It belongs to the succinate/malate CoA ligase beta subunit family. ATP-specific subunit beta subfamily. Heterodimer of an alpha and a beta subunit. The beta subunit determines specificity for ATP. Interacts with ALAS2. Mg(2+) is required as a cofactor. In terms of tissue distribution, widely expressed. Not expressed in liver and lung.

The protein localises to the mitochondrion. The enzyme catalyses succinate + ATP + CoA = succinyl-CoA + ADP + phosphate. It participates in carbohydrate metabolism; tricarboxylic acid cycle; succinate from succinyl-CoA (ligase route): step 1/1. Its activity is regulated as follows. Inhibited by itaconate. Functionally, ATP-specific succinyl-CoA synthetase functions in the citric acid cycle (TCA), coupling the hydrolysis of succinyl-CoA to the synthesis of ATP and thus represents the only step of substrate-level phosphorylation in the TCA. The beta subunit provides nucleotide specificity of the enzyme and binds the substrate succinate, while the binding sites for coenzyme A and phosphate are found in the alpha subunit. The polypeptide is Succinate--CoA ligase [ADP-forming] subunit beta, mitochondrial (Homo sapiens (Human)).